The sequence spans 424 residues: Neurotensin receptor type 1 (424 aa).

Topologically, residues 1-67 (MHLNSSVQQG…TDIYSKVLVT (67 aa)) are extracellular. Residues Asn-4, Asn-38, and Asn-42 are each glycosylated (N-linked (GlcNAc...) asparagine). The chain crosses the membrane as a helical span at residues 68–88 (AVYLALFVVGTVGNSVTAFTL). The Cytoplasmic portion of the chain corresponds to 89–102 (ARKKSLQSLQSTVH). Residues 103–122 (YHLGSLALSDLLILLLAMPV) form a helical membrane-spanning segment. Topologically, residues 123–142 (ELYNFIWVHHPWAFGDAGCR) are extracellular. The cysteines at positions 141 and 224 are disulfide-linked. The chain crosses the membrane as a helical span at residues 143-164 (GYYFLRDACTYATALNVASLSV). The Cytoplasmic segment spans residues 165–184 (ERYLAICHPFKAKTLMSRSR). The chain crosses the membrane as a helical span at residues 185–205 (TKKFISAIWLASALLAVPMLF). The Extracellular segment spans residues 206 to 234 (TMGLQNRSADGQHPGGLVCTPTVDTATVK). A glycan (N-linked (GlcNAc...) asparagine) is linked at Asn-211. A helical membrane pass occupies residues 235 to 259 (VVIQVNTFMSFLFPMLIISILNTVI). The Cytoplasmic segment spans residues 260–308 (ANKLTVMVHQAAEQGRGVCTVGTHNSLEHSTFNMSIEPGRVQALRHGVL). A helical transmembrane segment spans residues 309–330 (VLRAVVIAFVVCWLPYHVRRLM). The interval 326–349 (VRRLMFCYISDEQWTTFLFDFYHY) is neurotensin binding. Residues 331–348 (FCYISDEQWTTFLFDFYH) lie on the Extracellular side of the membrane. A helical membrane pass occupies residues 349 to 369 (YFYMLTNALFYVSSAINPILY). The Cytoplasmic segment spans residues 370-424 (NLVSANFRQVFLSTLACLCPGWRRRRKKRPTFSRKPNSMSSNHAFSTSATRETLY). Residues Cys-386 and Cys-388 are each lipidated (S-palmitoyl cysteine). Residues 398-424 (RPTFSRKPNSMSSNHAFSTSATRETLY) are disordered. The span at 403-424 (RKPNSMSSNHAFSTSATRETLY) shows a compositional bias: polar residues.

Belongs to the G-protein coupled receptor 1 family. Neurotensin receptor subfamily. NTSR1 sub-subfamily. In terms of assembly, interacts (palmitoylated form) with GNA11. N-glycosylated. In terms of processing, palmitoylated; this is required for normal localization at membrane rafts and normal GNA11-mediated activation of down-stream signaling cascades. The palmitoylation level increases in response to neurotensin treatment.

Its subcellular location is the cell membrane. The protein localises to the membrane raft. Its function is as follows. G-protein coupled receptor for the tridecapeptide neurotensin (NTS). Signaling is effected via G proteins that activate a phosphatidylinositol-calcium second messenger system. Signaling leads to the activation of downstream MAP kinases and protects cells against apoptosis. The sequence is that of Neurotensin receptor type 1 (Ntsr1) from Mus musculus (Mouse).